The chain runs to 237 residues: Ribonuclease PH (237 aa).

Phosphate-binding positions include R86 and 124–126 (GTR).

Belongs to the RNase PH family. As to quaternary structure, homohexameric ring arranged as a trimer of dimers.

It carries out the reaction tRNA(n+1) + phosphate = tRNA(n) + a ribonucleoside 5'-diphosphate. Its function is as follows. Phosphorolytic 3'-5' exoribonuclease that plays an important role in tRNA 3'-end maturation. Removes nucleotide residues following the 3'-CCA terminus of tRNAs; can also add nucleotides to the ends of RNA molecules by using nucleoside diphosphates as substrates, but this may not be physiologically important. Probably plays a role in initiation of 16S rRNA degradation (leading to ribosome degradation) during starvation. This Shewanella piezotolerans (strain WP3 / JCM 13877) protein is Ribonuclease PH.